Reading from the N-terminus, the 155-residue chain is Ribosomal RNA large subunit methyltransferase H (155 aa).

S-adenosyl-L-methionine contacts are provided by residues leucine 72, glycine 103, and 122–127 (LSDLTL).

Belongs to the RNA methyltransferase RlmH family. Homodimer.

It is found in the cytoplasm. It carries out the reaction pseudouridine(1915) in 23S rRNA + S-adenosyl-L-methionine = N(3)-methylpseudouridine(1915) in 23S rRNA + S-adenosyl-L-homocysteine + H(+). In terms of biological role, specifically methylates the pseudouridine at position 1915 (m3Psi1915) in 23S rRNA. The protein is Ribosomal RNA large subunit methyltransferase H of Variovorax paradoxus (strain S110).